The following is a 432-amino-acid chain: Pachytene checkpoint protein 2 homolog (432 aa).

179 to 186 (GPPGTGKT) provides a ligand contact to ATP.

It belongs to the AAA ATPase family. PCH2 subfamily.

Plays a key role in chromosome recombination and chromosome structure development during meiosis. Required at early steps in meiotic recombination that leads to non-crossovers pathways. Also needed for efficient completion of homologous synapsis by influencing crossover distribution along the chromosomes affecting both crossovers and non-crossovers pathways. The sequence is that of Pachytene checkpoint protein 2 homolog (TRIP13) from Gallus gallus (Chicken).